The chain runs to 525 residues: MTTEGVVIDGESLTPAAVDAVARHDAPVSIAAGAREAVRESRARIADVLGGDEAVYGVNTGFGSMSDTRIDAADREALQANLVRSHAAGAGSELDTAAVRALLVTRLNALAKGYSGIRERVLDVLVGLLNEGVHPVVPSRGSLGASGDLAPLAHMSRVLIGEGQADVAGERMPAAEALAAADLEPVTLQAKEGLALINGTQLTTGVAALALVDAERVLRSADTAGALTTEVTMSTTASCAPAIHEVRPHDGQAVSARHIRNLTAGSEVLDHHRDCDRVQDAYSIRCLPQVHGAVRDALDHLRAAVATELNSATDNPLVFAGDRVGPRASGTDRAAVVSGGNFHGEVLALRLGYAASALAELAAISERRTDRLLNPETQEPHLEPFLAPDSGLHSGLMIPQYTAASLVNDLRSLGQPTLDNASVSGAQEDHVSMSAGAAYNFREAVEKAATVVGVELLCGAQGREFLDPDLALGAGTAAAYDLVREVSEPVAGDRALADDMAAVGDLVRAGLVEDAVARALDAPLA.

Positions 145–147 (ASG) form a cross-link, 5-imidazolinone (Ala-Gly). Residue S146 is modified to 2,3-didehydroalanine (Ser).

Belongs to the PAL/histidase family. Contains an active site 4-methylidene-imidazol-5-one (MIO), which is formed autocatalytically by cyclization and dehydration of residues Ala-Ser-Gly.

It localises to the cytoplasm. The enzyme catalyses L-histidine = trans-urocanate + NH4(+). Its pathway is amino-acid degradation; L-histidine degradation into L-glutamate; N-formimidoyl-L-glutamate from L-histidine: step 1/3. The chain is Probable histidine ammonia-lyase from Halobacterium salinarum (strain ATCC 29341 / DSM 671 / R1).